The following is a 601-amino-acid chain: Elongation factor 4 (601 aa).

The tr-type G domain maps to 5–187; that stretch reads DKIRNFSIIA…SIVKDLPAPQ (183 aa). GTP is bound by residues 17-22 and 134-137; these read DHGKST and NKVD.

It belongs to the TRAFAC class translation factor GTPase superfamily. Classic translation factor GTPase family. LepA subfamily.

Its subcellular location is the cell inner membrane. It catalyses the reaction GTP + H2O = GDP + phosphate + H(+). Functionally, required for accurate and efficient protein synthesis under certain stress conditions. May act as a fidelity factor of the translation reaction, by catalyzing a one-codon backward translocation of tRNAs on improperly translocated ribosomes. Back-translocation proceeds from a post-translocation (POST) complex to a pre-translocation (PRE) complex, thus giving elongation factor G a second chance to translocate the tRNAs correctly. Binds to ribosomes in a GTP-dependent manner. The chain is Elongation factor 4 from Maridesulfovibrio salexigens (strain ATCC 14822 / DSM 2638 / NCIMB 8403 / VKM B-1763) (Desulfovibrio salexigens).